The sequence spans 442 residues: MGKKQSEAEILSSNSSNTSPATFKLVGFNNFVRANPKSDHFAVKRFHHIEFWCGDATNTSRRFSWGLGMPLVAKSDLSTGNSVHASYLVRSANLSFVFTAPYSPSTTTSSGSAAIPSFSASGFHSFAAKHGLAVRAIALEVADVAAAFEASVARGARPASAPVELDDQAWLAEVELYGDVVLRFVSFGREEGLFLPGFEAVEGTASFPDLDYGIRRLDHAVGNVTELGPVVEYIKGFTGFHEFAEFTAEDVGTLESGLNSVVLANNEEMVLLPLNEPVYGTKRKSQIQTYLEHNEGAGVQHLALVSEDIFRTLREMRKRSCLGGFEFMPSPPPTYYKNLKNRVGDVLSDEQIKECEDLGILVDRDDQGTLLQIFTKPVGDRPTLFIEIIQRVGCMLKDDAGQMYQKGGCGGFGKGNFSELFKSIEEYEKTLEAKQITGSAAA.

VOC domains are found at residues 45-200 and 216-376; these read RFHH…GFEA and RLDH…IFTK. Fe cation is bound by residues His-219, His-301, and Glu-387.

The protein belongs to the 4HPPD family. Fe cation is required as a cofactor.

The protein resides in the cytoplasm. The enzyme catalyses 3-(4-hydroxyphenyl)pyruvate + O2 = homogentisate + CO2. It participates in amino-acid degradation; L-phenylalanine degradation; acetoacetate and fumarate from L-phenylalanine: step 3/6. Its pathway is cofactor biosynthesis; prenylquinone biosynthesis. This Daucus carota (Wild carrot) protein is 4-hydroxyphenylpyruvate dioxygenase.